A 679-amino-acid chain; its full sequence is Stress-70 protein, mitochondrial (679 aa).

The transit peptide at 1-46 (MISASRAAAARLVGTTASRSPAAARHQDGWNGLSHEAFRFVSRRDY) directs the protein to the mitochondrion. Residues 1-432 (MISASRAAAA…IQGGVLAGDV (432 aa)) are interaction with NFS1. ADP is bound by residues Thr-63 and Asn-64. Residues 63–431 (TNSCVAVMEG…AIQGGVLAGD (369 aa)) form a nucleotide-binding domain (NBD) region. Lys-76 carries the N6-acetyllysine modification. At Thr-87 the chain carries Phosphothreonine. Residues Lys-135 and Lys-138 each carry the N6-acetyllysine; alternate modification. Lys-135 and Lys-138 each carry N6-succinyllysine; alternate. Lys-143 bears the N6-acetyllysine mark. Position 206 is an N6-acetyllysine; alternate (Lys-206). At Lys-206 the chain carries N6-succinyllysine; alternate. Position 206 is an N6-malonyllysine; alternate (Lys-206). Residues Lys-234 and Lys-288 each carry the N6-acetyllysine modification. An N6-acetyllysine; alternate modification is found at Lys-300. Lys-300 carries the post-translational modification N6-succinyllysine; alternate. ADP contacts are provided by Glu-313, Lys-316, and Ser-320. Lys-360 is subject to N6-acetyllysine; alternate. The residue at position 360 (Lys-360) is an N6-succinyllysine; alternate. N6-succinyllysine is present on Lys-368. Gly-388 and Arg-391 together coordinate ADP. At Lys-394 the chain carries N6-succinyllysine. Ser-408 bears the Phosphoserine mark. An interdomain linker region spans residues 432–441 (VTDVLLLDVT). An interaction with FXN and ISCU region spans residues 432 to 679 (VTDVLLLDVT…QKEDQKEEKQ (248 aa)). Residues 442-679 (PLSLGIETLG…QKEDQKEEKQ (238 aa)) form a substrate-binding domain (SBD) region. Arg-513 is subject to Omega-N-methylarginine. N6-acetyllysine; alternate is present on residues Lys-567 and Lys-600. An N6-succinyllysine; alternate mark is found at Lys-567 and Lys-600. Residue Lys-610 is modified to N6-succinyllysine. Lys-612 is modified (N6-acetyllysine). Residue Lys-646 is modified to N6-acetyllysine; alternate. Position 646 is an N6-succinyllysine; alternate (Lys-646). Residues 655-679 (MASEREGSGSSSTGEQKEDQKEEKQ) are disordered. The span at 669 to 679 (EQKEDQKEEKQ) shows a compositional bias: basic and acidic residues.

It belongs to the heat shock protein 70 family. In terms of assembly, interacts strongly with the intermediate form of FXN and weakly with its mature form. Interacts with HSCB. Associates with the mitochondrial contact site and cristae organizing system (MICOS) complex, composed of at least MICOS10/MIC10, CHCHD3/MIC19, CHCHD6/MIC25, APOOL/MIC27, IMMT/MIC60, APOO/MIC23/MIC26 and QIL1/MIC13. This complex was also known under the names MINOS or MitOS complex. The MICOS complex associates with mitochondrial outer membrane proteins SAMM50, MTX1, MTX2 and DNAJC11, mitochondrial inner membrane protein TMEM11 and with HSPA9. Interacts with DNLZ, the interaction is required to prevent self-aggregation. Interacts with TESPA1. Interacts with PDPN. Interacts with NFU1, NFS1 and ISCU. Interacts with TP53; the interaction promotes TP53 degradation. Interacts (via SBD domain) with UBXN2A; the interaction with UBXN2A inhibits HSPA9 interaction with and degradation of TP53, thereby promotes TP53 translocation to the nucleus. Interacts with ITPR1 AND VDAC1; this interaction couples ITPR1 to VDAC1. Component of the TIM23 mitochondrial inner membrane pre-sequence translocase complex.

The protein resides in the mitochondrion. The protein localises to the nucleus. Its subcellular location is the nucleolus. It is found in the cytoplasm. It localises to the mitochondrion matrix. The catalysed reaction is ATP + H2O = ADP + phosphate + H(+). With respect to regulation, the chaperone activity is regulated by ATP-induced allosteric coupling of the nucleotide-binding (NBD) and substrate-binding (SBD) domains. ATP binding in the nucleotide-binding pocket (NBP) leads to a conformational change in the NBD, which is transferred through the interdomain linker (IDL) to the substrate-binding domain (SBD). This elicits a reduced substrate affinity and a faster substrate exchange rate. Upon hydrolysis of ATP to ADP, the protein undergoes a conformational change that increases its affinity for substrate proteins. It cycles through repeated phases of ATP hydrolysis and nucleotide exchange, facilitating repeated cycles of substrate binding and release. Functions in collaboration with co-chaperones. Functions with the co-chaperone, DNLZ, to maintain solubility and regulate ATP hydrolysis. Nucleotide exchange factors, GRPEL1 and GRPEL2, accelerate nucleotide exchange. In terms of biological role, mitochondrial chaperone that plays a key role in mitochondrial protein import, folding, and assembly. Plays an essential role in the protein quality control system, the correct folding of proteins, the re-folding of misfolded proteins, and the targeting of proteins for subsequent degradation. These processes are achieved through cycles of ATP binding, ATP hydrolysis, and ADP release, mediated by co-chaperones. In mitochondria, it associates with the TIM (translocase of the inner membrane) protein complex to assist in the import and folding of mitochondrial proteins. Plays an important role in mitochondrial iron-sulfur cluster (ISC) biogenesis, interacts with and stabilizes ISC cluster assembly proteins FXN, NFU1, NFS1 and ISCU. Regulates erythropoiesis via stabilization of ISC assembly. Regulates mitochondrial calcium-dependent apoptosis by coupling two calcium channels, ITPR1 and VDAC1, at the mitochondria-associated endoplasmic reticulum (ER) membrane to facilitate calcium transport from the ER lumen to the mitochondria intermembrane space, providing calcium for the downstream calcium channel MCU, which releases it into the mitochondrial matrix. Although primarily located in the mitochondria, it is also found in other cellular compartments. In the cytosol, it associates with proteins involved in signaling, apoptosis, or senescence. It may play a role in cell cycle regulation via its interaction with and promotion of degradation of TP53. May play a role in the control of cell proliferation and cellular aging. Protects against reactive oxygen species (ROS). Extracellular HSPA9 plays a cytoprotective role by preventing cell lysis following immune attack by the membrane attack complex by disrupting formation of the complex. This chain is Stress-70 protein, mitochondrial, found in Rattus norvegicus (Rat).